A 280-amino-acid chain; its full sequence is Late embryogenesis abundant protein M17 (280 aa).

Positions 1 to 22 (MGNLKSLVLLALLFSFSVAVFA) are cleaved as a signal peptide. N-linked (GlcNAc...) asparagine glycosylation is present at asparagine 23. 2 tandem repeats follow at residues 76–97 (GGCR…CCRS) and 131–152 (GGCR…CCRS). Residues 76-262 (GGCRWGCCGG…RGRCRYCCRS (187 aa)) form a 4 X 22 AA repeats, Cys-rich region. The disordered stretch occupies residues 163–184 (VEPNDVEPQQGGRGGGGGGGGG). Residues 173 to 184 (GGRGGGGGGGGG) are compositionally biased toward gly residues. The stretch at 186–207 (GGCRWGCCGGWWRGRCRYCCRS) is repeat 3. The segment at 218–239 (VEPNDVEPQQGGRGGGGGGGGG) is disordered. Residues 228–239 (GGRGGGGGGGGG) show a composition bias toward gly residues. The stretch at 241–262 (GGCRWGCCGGWWRGRCRYCCRS) is repeat 4.

In terms of biological role, may be involved in the acquisition of desiccation tolerance during late phase of embryogenesis. The chain is Late embryogenesis abundant protein M17 from Arabidopsis thaliana (Mouse-ear cress).